The primary structure comprises 257 residues: (R)-2-haloacid dehalogenase (257 aa).

It belongs to the HAD-like hydrolase superfamily. S-2-haloalkanoic acid dehalogenase family.

The enzyme catalyses an (R)-2-haloacid + H2O = a (2S)-2-hydroxycarboxylate + a halide anion + H(+). In terms of biological role, catalyzes the hydrolytic dehalogenation of small (R)-2-haloalkanoic acids to yield the corresponding (S)-2-hydroxyalkanoic acids. Acts on acids of short chain lengths, C(2) to C(4), with inversion of configuration at C-2. This is (R)-2-haloacid dehalogenase (dehI) from Rhizobium sp. (strain NHG3).